A 215-amino-acid chain; its full sequence is UPF0502 protein YceH (215 aa).

Lys-80 carries the N6-acetyllysine modification.

The protein belongs to the UPF0502 family.

This chain is UPF0502 protein YceH, found in Shigella boydii serotype 18 (strain CDC 3083-94 / BS512).